Here is a 739-residue protein sequence, read N- to C-terminus: MSVEHPPIGEANTEPAAGGCPVTGRLRHPLQGGGNHEWWPNQLNLKVLAKNPAEGNPLGDFDYKAAFNSLDLAAVKADIAEVLTTSQDWWPADFGNYGPLMIRMAWHSAGTYRSSDGRGGANTGQQRFAPLNSWPDNGNLDKARRLLWPVKKKYGQNISWADLMILAGNVALETMGFKTFGFAGGRVDVWEPEEDVYWGPEAEWLGDKRYSGERDLENPLAAVQMGLIYVNPEGPNGNPDPLAAAVDIKDTFGRMGMTVEETVALIAGGHTFGKTHGAGDAALVGAEPEAAPLEQMGLGWKSSHGTGKGADAITSGLEVVWTTKPTQWSNDFFEILFGYEWELTKSPAGANQWVAKDAQPIIPDPFDPAKKRLPTMLTTDLSLRVDPEMEVISRRFKDNPDEFADAFARAWFKLTHRDLGPVTRYLGPEVPSEVQLWQDPIPAVDHELVDAADIAALKEQILASELSISQLVKTAWAAASSFRGSDYRGGANGGRIRLQPQLGWEVNEPDELARVIAVLEGIQEQFNAAQTGNKKVSFADLVVLGGVAAVEQAARNAGVAVEVPFTPGRADTTQELTDPEGFAVLEPKADGFRNYLGKANPLPAEYLLVDKANLLTLTAPEMTVLVGGLRVLNANYQRSPLGVLTETPESLTNDFFVNLLDMGVVWEPSPADDGTYVGKDAATGAQKWTGSRVDLLFGSNSVLRSLAEVYATDDAKPKFVQDFVAAWNKVMNLDRFDLA.

Residues 1–33 (MSVEHPPIGEANTEPAAGGCPVTGRLRHPLQGG) are disordered. Positions 106 to 229 (WHSAGTYRSS…LAAVQMGLIY (124 aa)) form a cross-link, tryptophyl-tyrosyl-methioninium (Trp-Tyr) (with M-255). The Proton acceptor role is filled by H107. A disordered region spans residues 113–134 (RSSDGRGGANTGQQRFAPLNSW). The segment at residues 229-255 (YVNPEGPNGNPDPLAAAVDIKDTFGRM) is a cross-link (tryptophyl-tyrosyl-methioninium (Tyr-Met) (with W-106)). H270 is a heme b binding site.

Belongs to the peroxidase family. Peroxidase/catalase subfamily. As to quaternary structure, homodimer or homotetramer. Heme b is required as a cofactor. Post-translationally, formation of the three residue Trp-Tyr-Met cross-link is important for the catalase, but not the peroxidase activity of the enzyme.

The enzyme catalyses H2O2 + AH2 = A + 2 H2O. It catalyses the reaction 2 H2O2 = O2 + 2 H2O. Functionally, bifunctional enzyme with both catalase and broad-spectrum peroxidase activity. This Nocardia farcinica (strain IFM 10152) protein is Catalase-peroxidase.